A 276-amino-acid chain; its full sequence is Neuroendocrine protein 7B2 (276 aa).

Cys-155 and Cys-168 are oxidised to a cystine.

Belongs to the 7B2 family. Interacts with amon/PC2 early in the secretory pathway. Dissociation occurs at later stages.

The protein localises to the secreted. In terms of biological role, acts as a molecular chaperone for neuroendocrine convertase amon/PC2, preventing its premature activation in the regulated secretory pathway. Binds to inactive amon in the endoplasmic reticulum and facilitates its transport from there to later compartments of the secretory pathway where it is proteolytically matured and activated. Also required for cleavage of amon. The chain is Neuroendocrine protein 7B2 from Drosophila melanogaster (Fruit fly).